We begin with the raw amino-acid sequence, 326 residues long: Protein FAM110C (326 aa).

Disordered regions lie at residues 1-37, 51-80, and 201-221; these read MRAL…KSAV, TLGS…PSTL, and VELR…LSSR. A compositionally biased stretch (polar residues) spans 209–221; sequence KGLQRSQSDLSSR. S255 carries the phosphoserine modification.

It belongs to the FAM110 family. In terms of assembly, interacts with AKT1; the interaction is transient and follows AKT1 activation. Interacts with PPP2CA and alpha-tubulin.

Its subcellular location is the cytoplasm. The protein localises to the cytoskeleton. It localises to the microtubule organizing center. It is found in the centrosome. The protein resides in the spindle pole. Its subcellular location is the nucleus. In terms of biological role, may play a role in microtubule organization. May play a role in cell spreading and cell migration of epithelial cells; the function may involve the AKT1 signaling pathway. In Rattus norvegicus (Rat), this protein is Protein FAM110C (Fam110c).